The following is a 278-amino-acid chain: Bis(5'-nucleosyl)-tetraphosphatase, symmetrical (278 aa).

This sequence belongs to the Ap4A hydrolase family.

The catalysed reaction is P(1),P(4)-bis(5'-adenosyl) tetraphosphate + H2O = 2 ADP + 2 H(+). In terms of biological role, hydrolyzes diadenosine 5',5'''-P1,P4-tetraphosphate to yield ADP. In Methylococcus capsulatus (strain ATCC 33009 / NCIMB 11132 / Bath), this protein is Bis(5'-nucleosyl)-tetraphosphatase, symmetrical.